Here is a 307-residue protein sequence, read N- to C-terminus: MEFVFLGTGAGVPSKGRNVSAIALQLLEERGQTWLFDCGEATQHQILHTSVRPRRIEKIFITHLHGDHIFGLPGLLGSRSFQGGTTPLKVYGPKGIKQFIEVALSVSTTHVKYPLEVVEITEEGTVFEDNEFYVETKRLSHGIECFGYRIVEKDIQGALLVDKLLEMGVKPGPIFKRLKDGEVVELEDGTILNGNEFIGPPQKGRIITILGDTRYCEASRELAQDADVLVHEATFAAEDEQQAYDYFHSTSKQAASIALQANAKRLILTHISSRYQGDTYKELLKEARELFSNTEIATDLKSFPVEK.

Residues H63, H65, D67, H68, H141, D212, and H270 each coordinate Zn(2+). D67 acts as the Proton acceptor in catalysis.

This sequence belongs to the RNase Z family. As to quaternary structure, homodimer. Zn(2+) serves as cofactor.

The catalysed reaction is Endonucleolytic cleavage of RNA, removing extra 3' nucleotides from tRNA precursor, generating 3' termini of tRNAs. A 3'-hydroxy group is left at the tRNA terminus and a 5'-phosphoryl group is left at the trailer molecule.. Functionally, zinc phosphodiesterase, which displays some tRNA 3'-processing endonuclease activity. Probably involved in tRNA maturation, by removing a 3'-trailer from precursor tRNA. This Bacillus cereus (strain B4264) protein is Ribonuclease Z.